The sequence spans 220 residues: UPF0319 protein Ent638_1476 (220 aa).

The first 20 residues, 1 to 20, serve as a signal peptide directing secretion; that stretch reads MKTGIVSAVLALVMPVCVYA.

Belongs to the UPF0319 family.

This Enterobacter sp. (strain 638) protein is UPF0319 protein Ent638_1476.